The chain runs to 222 residues: Eukaryotic translation initiation factor 3 subunit K (222 aa).

One can recognise a PCI domain in the interval 46–208 (YDLEANLAVL…KIKTKNITEK (163 aa)).

This sequence belongs to the eIF-3 subunit K family. Component of the eukaryotic translation initiation factor 3 (eIF-3) complex. The eIF-3 complex interacts with pix.

It is found in the cytoplasm. Component of the eukaryotic translation initiation factor 3 (eIF-3) complex, which is involved in protein synthesis of a specialized repertoire of mRNAs and, together with other initiation factors, stimulates binding of mRNA and methionyl-tRNAi to the 40S ribosome. The eIF-3 complex specifically targets and initiates translation of a subset of mRNAs involved in cell proliferation. The sequence is that of Eukaryotic translation initiation factor 3 subunit K from Drosophila persimilis (Fruit fly).